We begin with the raw amino-acid sequence, 573 residues long: 60 kDa lysophospholipase (573 aa).

The Asparaginase/glutaminase domain maps to Arg-9–Asp-355. Residue Thr-19 is the Acyl-ester intermediate of the active site. The segment at Thr-41–Glu-350 is asparaginase. Residues Asp-84 to Ser-86 and Thr-116 to Asp-117 each bind substrate. ANK repeat units lie at residues Gly-141–Pro-170, Ala-399–Leu-429, Asn-433–Thr-462, Asp-466–Thr-495, and Asp-533–Ala-562.

In the N-terminal section; belongs to the asparaginase 1 family. In terms of assembly, monomer.

It catalyses the reaction a 1-acyl-sn-glycero-3-phosphocholine + H2O = sn-glycerol 3-phosphocholine + a fatty acid + H(+). The catalysed reaction is L-asparagine + H2O = L-aspartate + NH4(+). The enzyme catalyses a 1-O-alkyl-2-acetyl-sn-glycero-3-phosphocholine + H2O = a 1-O-alkyl-sn-glycero-3-phosphocholine + acetate + H(+). It carries out the reaction 1-hexadecanoyl-sn-glycero-3-phosphocholine + H2O = sn-glycerol 3-phosphocholine + hexadecanoate + H(+). It catalyses the reaction 2 1-hexadecanoyl-sn-glycero-3-phosphocholine = 1,2-dihexadecanoyl-sn-glycero-3-phosphocholine + sn-glycerol 3-phosphocholine. The catalysed reaction is 1-octadecanoyl-sn-glycero-3-phosphocholine + H2O = octadecanoate + sn-glycerol 3-phosphocholine + H(+). The enzyme catalyses 1-(9Z-octadecenoyl)-sn-glycero-3-phosphocholine + H2O = sn-glycerol 3-phosphocholine + (9Z)-octadecenoate + H(+). It carries out the reaction 1-hexadecanoyl-sn-glycero-3-phosphoethanolamine + H2O = sn-glycero-3-phosphoethanolamine + hexadecanoate + H(+). It catalyses the reaction 1-(9Z-octadecenoyl)-sn-glycero-3-phosphoethanolamine + H2O = sn-glycero-3-phosphoethanolamine + (9Z)-octadecenoate + H(+). The catalysed reaction is 1-hexadecanoyl-sn-glycero-3-phosphoethanolamine + 1-hexadecanoyl-sn-glycero-3-phosphocholine = 1,2-dihexadecanoyl-sn-glycero-3-phosphoethanolamine + sn-glycerol 3-phosphocholine. The enzyme catalyses 2-(5Z,8Z,11Z,14Z)-eicosatetraenoyl-sn-glycero-3-phosphocholine + H2O = sn-glycerol 3-phosphocholine + (5Z,8Z,11Z,14Z)-eicosatetraenoate + H(+). It carries out the reaction 2-hexadecanoyl-sn-glycero-3-phosphocholine + H2O = sn-glycerol 3-phosphocholine + hexadecanoate + H(+). It catalyses the reaction 2 2-hexadecanoyl-sn-glycero-3-phosphocholine = 1,2-dihexadecanoyl-sn-glycero-3-phosphocholine + sn-glycerol 3-phosphocholine. The catalysed reaction is 1-O-(9Z)-octadecenoyl-2-O-acetyl-sn-glycero-3-phosphocholine + H2O = 2-acetyl-sn-glycero-3-phosphocholine + (9Z)-octadecenoate + H(+). The enzyme catalyses a 1-acyl-sn-glycero-3-phospho-(1D-myo-inositol) + 1-hexadecanoyl-sn-glycero-3-phosphocholine = a 1-acyl-2-hexadecanoyl-sn-glycero-3-phospho-(1D-myo-inositol) + sn-glycerol 3-phosphocholine. It carries out the reaction 2 2-(5Z,8Z,11Z,14Z)-eicosatetraenoyl-sn-glycero-3-phosphocholine = 1,2-di-(5Z,8Z,11Z,14Z-eicosatetraenoyl)-sn-glycero-3-phosphocholine + sn-glycerol 3-phosphocholine. In terms of biological role, exhibits lysophospholipase, transacylase, PAF acetylhydrolase and asparaginase activities. Can catalyze three types of transacylation reactions: (1) acyl transfer from 1-acyl-sn-glycero-3-phosphocholine (1-acyl-GPC) to the sn-1(3) positions of glycerol and 2-acylglycerol (sn-1 to -1(3) transfer), (2) acyl transfer from 1-acyl-GPC to the sn-2 positions of 1-acyl-GPC, 1-acyl-sn-glycero-3-phosphoethanolamine (1-acyl-GPE), and other lysophospholipids (sn-1 to -2 transfer) and (3) acyl transfer from 2-acyl-GPC to the sn-1 position of 2-acyl-GPC and 2-acyl-GPE (sn-2 to -1 transfer). Mediates the synthesis of 1-arachidonoyl species of phospholipids by transferring the arachidonoyl residue from 2-arachidonoyl lysophospholipid to the sn-1 position of 2-acyl lysophospholipid. In Homo sapiens (Human), this protein is 60 kDa lysophospholipase (ASPG).